A 198-amino-acid chain; its full sequence is Autophagy-related protein 33 (198 aa).

3 helical membrane-spanning segments follow: residues valine 17–leucine 37, proline 60–proline 80, and proline 86–proline 106. Residues alanine 111 to aspartate 147 form a disordered region. Residues proline 112 to arginine 121 show a composition bias toward low complexity. The span at alanine 126–proline 142 shows a compositional bias: basic and acidic residues. Residues threonine 171–proline 191 form a helical membrane-spanning segment.

Belongs to the ATG33 family.

It is found in the mitochondrion membrane. In terms of biological role, involved in the selective degradation of mitochondria via autophagy during starvation and at post-log phase. Autophagy is required for proper vegetative growth, asexual/sexual reproduction, and full virulence. Autophagy is particularly involved in the biosynthesis of deoxynivalenol (DON), an important virulence determinant. The polypeptide is Autophagy-related protein 33 (Gibberella zeae (strain ATCC MYA-4620 / CBS 123657 / FGSC 9075 / NRRL 31084 / PH-1) (Wheat head blight fungus)).